The sequence spans 398 residues: Argininosuccinate synthase (398 aa).

10–18 (AYSGGLDTS) provides a ligand contact to ATP. Tyr-87 contacts L-citrulline. An ATP-binding site is contributed by Gly-117. 3 residues coordinate L-aspartate: Thr-119, Asn-123, and Asp-124. An L-citrulline-binding site is contributed by Asn-123. Residues Arg-127, Ser-175, Glu-260, and Tyr-272 each coordinate L-citrulline.

This sequence belongs to the argininosuccinate synthase family. Type 1 subfamily. Homotetramer.

The protein localises to the cytoplasm. The catalysed reaction is L-citrulline + L-aspartate + ATP = 2-(N(omega)-L-arginino)succinate + AMP + diphosphate + H(+). The protein operates within amino-acid biosynthesis; L-arginine biosynthesis; L-arginine from L-ornithine and carbamoyl phosphate: step 2/3. The polypeptide is Argininosuccinate synthase (Lactococcus lactis subsp. lactis (strain IL1403) (Streptococcus lactis)).